The primary structure comprises 68 residues: MSDETAKPFEPKPCPICGKPSIERYKPFCSKRCADVDLNRWLTGAYAIPVVEEEDEDGEPLSPPLRPE.

Zn(2+)-binding residues include Cys14, Cys17, Cys29, and Cys33.

It belongs to the DNA gyrase inhibitor YacG family. Interacts with GyrB. Zn(2+) is required as a cofactor.

Functionally, inhibits all the catalytic activities of DNA gyrase by preventing its interaction with DNA. Acts by binding directly to the C-terminal domain of GyrB, which probably disrupts DNA binding by the gyrase. This Azorhizobium caulinodans (strain ATCC 43989 / DSM 5975 / JCM 20966 / LMG 6465 / NBRC 14845 / NCIMB 13405 / ORS 571) protein is DNA gyrase inhibitor YacG.